The sequence spans 490 residues: Bifunctional protein HldE (490 aa).

The ribokinase stretch occupies residues 1–330 (MLDFEQLSPA…RKILPHAFLA (330 aa)). Residue 205–208 (NRKE) participates in ATP binding. D275 is a catalytic residue. Residues 358-490 (FTNGCFDILH…LVARAQNGKS (133 aa)) form a cytidylyltransferase region.

The protein in the N-terminal section; belongs to the carbohydrate kinase PfkB family. It in the C-terminal section; belongs to the cytidylyltransferase family. As to quaternary structure, homodimer.

The enzyme catalyses D-glycero-beta-D-manno-heptose 7-phosphate + ATP = D-glycero-beta-D-manno-heptose 1,7-bisphosphate + ADP + H(+). The catalysed reaction is D-glycero-beta-D-manno-heptose 1-phosphate + ATP + H(+) = ADP-D-glycero-beta-D-manno-heptose + diphosphate. It participates in nucleotide-sugar biosynthesis; ADP-L-glycero-beta-D-manno-heptose biosynthesis; ADP-L-glycero-beta-D-manno-heptose from D-glycero-beta-D-manno-heptose 7-phosphate: step 1/4. The protein operates within nucleotide-sugar biosynthesis; ADP-L-glycero-beta-D-manno-heptose biosynthesis; ADP-L-glycero-beta-D-manno-heptose from D-glycero-beta-D-manno-heptose 7-phosphate: step 3/4. In terms of biological role, catalyzes the phosphorylation of D-glycero-D-manno-heptose 7-phosphate at the C-1 position to selectively form D-glycero-beta-D-manno-heptose-1,7-bisphosphate. Functionally, catalyzes the ADP transfer from ATP to D-glycero-beta-D-manno-heptose 1-phosphate, yielding ADP-D-glycero-beta-D-manno-heptose. The protein is Bifunctional protein HldE of Rhodopseudomonas palustris (strain BisA53).